The sequence spans 180 residues: Large ribosomal subunit protein uL6 (180 aa).

Belongs to the universal ribosomal protein uL6 family. In terms of assembly, part of the 50S ribosomal subunit.

This protein binds to the 23S rRNA, and is important in its secondary structure. It is located near the subunit interface in the base of the L7/L12 stalk, and near the tRNA binding site of the peptidyltransferase center. This chain is Large ribosomal subunit protein uL6, found in Caldanaerobacter subterraneus subsp. tengcongensis (strain DSM 15242 / JCM 11007 / NBRC 100824 / MB4) (Thermoanaerobacter tengcongensis).